We begin with the raw amino-acid sequence, 239 residues long: Protein-S-isoprenylcysteine O-methyltransferase (239 aa).

Topologically, residues 1–23 (MHQDFQEDEHEYPDIRRNPLHEV) are cytoplasmic. The chain crosses the membrane as a helical span at residues 24–44 (TMTSYILGILLGIFVGLFPQI). Over 45–47 (RFK) the chain is Lumenal. The helical transmembrane segment at 48–68 (NFNLFIIALSLFHFLEYYITA) threads the bilayer. The Cytoplasmic segment spans residues 69–88 (KYNPLKVHSESFLLNNGKSY). The chain crosses the membrane as a helical span at residues 89–109 (MAAHSFAILECLVESFLFPDL). A topological domain (lumenal) is located at residue K110. A helical transmembrane segment spans residues 111–131 (IFSYSLATKLCTVLGCLLVIL). The Cytoplasmic segment spans residues 132-175 (GQYTRTIAMHTAGHSFSHIVKTKKESDHVLVKTGVYSWSRHPSY). Residues 159 to 162 (HVLV), Y167, and 172 to 175 (HPSY) each bind S-adenosyl-L-methionine. An intramembrane region (helical) is located at residues 176-206 (LGFFWWAIGTQLLLLNPLSLVIFIFVLWKFF). The Cytoplasmic portion of the chain corresponds to 207 to 239 (SDRIRVEEKYLIEFFSAEYIEYKNKVGVGIPFI). R209 serves as a coordination point for substrate. E213 is a binding site for S-adenosyl-L-methionine.

This sequence belongs to the class VI-like SAM-binding methyltransferase superfamily. Isoprenylcysteine carboxyl methyltransferase family.

The protein resides in the endoplasmic reticulum membrane. It carries out the reaction [protein]-C-terminal S-[(2E,6E)-farnesyl]-L-cysteine + S-adenosyl-L-methionine = [protein]-C-terminal S-[(2E,6E)-farnesyl]-L-cysteine methyl ester + S-adenosyl-L-homocysteine. In terms of biological role, mediates C-terminal methylation of the isoprenylated C-terminal cysteine in A-factor mating pheromone and Ras proteins. Does not have a preference for the farnesyl or geranylgeranyl moieties in the model substrates N-acetyl-S-farnesyl-L-cysteine (AFC) and N-acetyl-S-geranylgeranyl-L-cysteine (AGGC) in vitro. In Saccharomyces cerevisiae (strain ATCC 204508 / S288c) (Baker's yeast), this protein is Protein-S-isoprenylcysteine O-methyltransferase (STE14).